Here is a 465-residue protein sequence, read N- to C-terminus: Putative F-box/LRR-repeat protein At3g28410 (465 aa).

Positions 27–73 constitute an F-box domain; sequence ADFINYMPDDILHHILSFIPTDLAMRTSVLSRRWRHVWCETPCLDIK. 7 LRR repeats span residues 127 to 155, 178 to 203, 207 to 225, 278 to 302, 332 to 357, 402 to 427, and 447 to 465; these read VRDF…DVTL, FCQI…TLDT, LERL…DINR, ADRY…TVGE, FVRS…TLHT, TSKL…VVWL, and VETL…QSNC.

This Arabidopsis thaliana (Mouse-ear cress) protein is Putative F-box/LRR-repeat protein At3g28410.